We begin with the raw amino-acid sequence, 249 residues long: Isoprenyl transferase (249 aa).

Residue D29 is part of the active site. Mg(2+) is bound at residue D29. Residues 30-33 (GNGR), W34, R42, H46, and 74-76 (STE) each bind substrate. Catalysis depends on N77, which acts as the Proton acceptor. Residues W78, R80, R197, and 203–205 (RLS) contribute to the substrate site. E216 provides a ligand contact to Mg(2+).

It belongs to the UPP synthase family. Homodimer. It depends on Mg(2+) as a cofactor.

Catalyzes the condensation of isopentenyl diphosphate (IPP) with allylic pyrophosphates generating different type of terpenoids. This Trichormus variabilis (strain ATCC 29413 / PCC 7937) (Anabaena variabilis) protein is Isoprenyl transferase.